Reading from the N-terminus, the 1038-residue chain is E3 ubiquitin-protein ligase Topors (1038 aa).

The tract at residues 53 to 96 (ESGSESGDNEAEEPVSAGPDNANAIGEPGTSASAAEENGTVERN) is disordered. The RING-type zinc finger occupies 102 to 141 (CAICLSRCRRKCFTDSCMHQFCFKCLCEWSKIKPECPLCK). Residues 495–682 (AAANAEVAAI…SSDSSTTNSE (188 aa)) are interaction with hairy/hry. Disordered regions lie at residues 627–858 (DQLR…SSTA) and 972–1038 (GESE…LLPY). A compositionally biased stretch (basic residues) spans 633–642 (RSIRSKKSRR). The segment covering 643–668 (SSMPARSDSGSSPSSCSSSSFHFSSS) has biased composition (low complexity). A compositionally biased stretch (basic residues) spans 686–699 (KKSRKRVANNKRSK). Residues 723–744 (QQQISQKKPQRQPESSSDSPSS) are compositionally biased toward low complexity. The span at 792-801 (ATLEDRKPVK) shows a compositional bias: basic and acidic residues. Phosphothreonine is present on threonine 820. The residue at position 822 (serine 822) is a Phosphoserine. Low complexity predominate over residues 841–858 (SHSNQSSQSASLASSSTA). The span at 987-1031 (EEQDEEDEEDEDQEEDDQEEEKAAEEEEEEEEDDDDSDNHDENDE) shows a compositional bias: acidic residues.

In terms of assembly, interacts with hairy/hry, p53 and Top1. Interacts with the gypsy chromatin insulator complex, composed of Cp190, mod(mdg4) and su(Hw); interacts directly with mod(mdg4) and su(Hw). Interacts with Lam/lamin.

Its subcellular location is the nucleus. It is found in the chromosome. It carries out the reaction S-ubiquitinyl-[E2 ubiquitin-conjugating enzyme]-L-cysteine + [acceptor protein]-L-lysine = [E2 ubiquitin-conjugating enzyme]-L-cysteine + N(6)-ubiquitinyl-[acceptor protein]-L-lysine.. Functions as a ubiquitin-protein E3 ligase. Negatively regulates the transcriptional repressor hairy/hry by promoting its ubiquitination and subsequent degradation. Also directs the nuclear organization of the gypsy chromatin insulator. Chromatin insulators are regulatory elements which establish independent domains of transcriptional activity within eukaryotic genomes. Insulators have two defining properties; they can block the communication between an enhancer and a promoter when placed between them, and can also buffer transgenes from position effect variegation (PEV). Insulators are proposed to structure the chromatin fiber into independent domains of differing transcriptional potential by promoting the formation of distinct chromatin loops. This chromatin looping may require the formation of insulator bodies, where homotypic interactions between individual subunits of the insulator complex could promote the clustering of widely spaced insulators at the nuclear periphery. Within the gypsy insulator complex, this protein may promote formation of nuclear insulator bodies by recruiting individual insulator complexes to the nuclear lamina. This chain is E3 ubiquitin-protein ligase Topors (Topors), found in Drosophila melanogaster (Fruit fly).